The following is a 2194-amino-acid chain: Nucleosome-remodeling factor subunit NURF301-like (2194 aa).

Basic residues predominate over residues 1-12; it reads MAPPRGRSKRKH. The segment at 1 to 137 is disordered; that stretch reads MAPPRGRSKR…EEEESSDDEF (137 aa). Residues 60-79 show a composition bias toward basic and acidic residues; it reads AQRETPSDAEEVEVKIEEIS. Over residues 80–93 the composition is skewed to polar residues; it reads VRSTPASTPAPKST. Positions 94-112 are enriched in basic residues; the sequence is SKARGRPKKNPTPPRRKSL. Residues 118 to 137 are compositionally biased toward acidic residues; that stretch reads DIIYMDEDSEEEEESSDDEF. 2 consecutive DDT domains span residues 196 to 256 and 341 to 396; these read TASI…SDDE and VGKF…SAVR. The PHD-type 1 zinc-finger motif lies at 347 to 392; sequence DENCRVCGKSSGRVVGCTQCEAAFHVECSHLKPFPEVLVCNICKKN. Disordered stretches follow at residues 1091–1122, 1158–1255, 1413–1433, 1657–1701, and 1834–1888; these read ESWLSRNRGGSSEFSHRSSSARKKRPQRSLDN, AKRK…PQPN, TSNFDAQRAQQQHPQSRPVYS, MRQE…SNDS, and ESIA…HTPG. A coiled-coil region spans residues 1151-1187; the sequence is RAEAEKTAKRKLEATRKAQKAKEDEERRRIQQQQQRS. Residues 1158–1179 are compositionally biased toward basic and acidic residues; it reads AKRKLEATRKAQKAKEDEERRR. Residues 1665–1684 are compositionally biased toward polar residues; the sequence is TSGYDSSGNPIRSITSSGDT. The span at 1852-1861 shows a compositional bias: basic and acidic residues; sequence KSEDDRDKPE. DDT domains follow at residues 1883-1953 and 1948-2014; these read AFHT…EQER and IEEQ…AEGY. 2 consecutive PHD-type zinc fingers follow at residues 1899 to 1950 and 1959 to 2010; these read IEHC…CIEE and ALYC…CTRE. The Bromo domain occupies 2030–2134; it reads QLTRADYTHV…EVFDKKLIDV (105 aa).

The protein belongs to the BPTF family. As to quaternary structure, part of a nucleosome remodeling factor-like (NURF-like) complex containing nurf-1 and isw-1.

It is found in the nucleus. In terms of biological role, histone-binding component of a NURF-like (nucleosome remodeling factor-like) complex, which would catalyze ATP-dependent nucleosome sliding and facilitate transcription of chromatin. Involved in vulval cell fates. This is Nucleosome-remodeling factor subunit NURF301-like (nurf-1) from Caenorhabditis elegans.